Here is a 284-residue protein sequence, read N- to C-terminus: Tropomyosin Per a 7.0102 (284 aa).

A coiled-coil region spans residues 1–266; sequence MDAIKKKMQA…EDELVHEKEK (266 aa).

It belongs to the tropomyosin family. In terms of assembly, homodimer. In terms of tissue distribution, expressed in striated skeletal muscle (at protein level).

Tropomyosin, in association with the troponin complex, plays a central role in the calcium dependent regulation of muscle contraction. The sequence is that of Tropomyosin Per a 7.0102 from Periplaneta americana (American cockroach).